We begin with the raw amino-acid sequence, 183 residues long: Translation initiation factor IF-3 (183 aa).

This sequence belongs to the IF-3 family. In terms of assembly, monomer.

The protein localises to the cytoplasm. In terms of biological role, IF-3 binds to the 30S ribosomal subunit and shifts the equilibrium between 70S ribosomes and their 50S and 30S subunits in favor of the free subunits, thus enhancing the availability of 30S subunits on which protein synthesis initiation begins. The sequence is that of Translation initiation factor IF-3 from Pseudomonas putida (strain ATCC 700007 / DSM 6899 / JCM 31910 / BCRC 17059 / LMG 24140 / F1).